A 132-amino-acid chain; its full sequence is MGLIVYYSSRSENTHRFLLKLERRLFRLPLGAEEDVPQVSEPYVLVTPTYGGGGTKGAVPKPVIRFLNEPSNRNLIRGVIAAGNTNFGAAFASAGDIVSRKCAVPFLYRFELLGTEEDVANVKHGLERFWTR.

It belongs to the NrdI family.

Functionally, probably involved in ribonucleotide reductase function. In Agrobacterium fabrum (strain C58 / ATCC 33970) (Agrobacterium tumefaciens (strain C58)), this protein is Protein NrdI.